The chain runs to 71 residues: Conotoxin Ca5.1 (71 aa).

The signal sequence occupies residues methionine 1–serine 19. Residues aspartate 20–alanine 56 constitute a propeptide that is removed on maturation.

The protein belongs to the conotoxin T superfamily. Post-translationally, contains 2 disulfide bonds that can be either 'C1-C3, C2-C4' or 'C1-C4, C2-C3', since these disulfide connectivities have been observed for conotoxins with cysteine framework V (for examples, see AC P0DQQ7 and AC P81755). As to expression, expressed by the venom duct.

The protein resides in the secreted. The polypeptide is Conotoxin Ca5.1 (Conus caracteristicus (Characteristic cone)).